Reading from the N-terminus, the 125-residue chain is Histone H2B (125 aa).

Positions 1–32 (MAPKVRAAKKGEKRVGKAKSGTAETAKRRRGK) are disordered. S112 carries an O-linked (GlcNAc) serine glycan. A Glycyl lysine isopeptide (Lys-Gly) (interchain with G-Cter in ubiquitin) cross-link involves residue K120.

It belongs to the histone H2B family. In terms of assembly, the nucleosome is a histone octamer containing two molecules each of H2A, H2B, H3 and H4 assembled in one H3-H4 heterotetramer and two H2A-H2B heterodimers. The octamer wraps approximately 147 bp of DNA. Post-translationally, monoubiquitination of Lys-120 gives a specific tag for epigenetic transcriptional activation and is also prerequisite for histone H3 'Lys-4' and 'Lys-79' methylation. In terms of processing, glcNAcylation at Ser-112 promotes monoubiquitination of Lys-120. It fluctuates in response to extracellular glucose, and associates with transcribed genes.

It localises to the nucleus. It is found in the chromosome. Its function is as follows. Core component of nucleosome. Nucleosomes wrap and compact DNA into chromatin, limiting DNA accessibility to the cellular machineries which require DNA as a template. Histones thereby play a central role in transcription regulation, DNA repair, DNA replication and chromosomal stability. DNA accessibility is regulated via a complex set of post-translational modifications of histones, also called histone code, and nucleosome remodeling. The sequence is that of Histone H2B from Acropora formosa (Staghorn coral).